Reading from the N-terminus, the 520-residue chain is Cyclic GMP-AMP synthase-like receptor (520 aa).

ATP-binding positions include S68 and 80-82; that span reads EFD. 3 residues coordinate Mg(2+): E80, D82, and D198. Position 198 (D198) interacts with GTP. Residue K264 coordinates ATP. Residues L288 and D294 each coordinate Mn(2+).

It belongs to the mab-21 family. Mg(2+) serves as cofactor. The cofactor is Mn(2+).

It carries out the reaction GTP + ATP = 2',3'-cGAMP + 2 diphosphate. It catalyses the reaction GTP + ATP = pppGp(2'-5')A + diphosphate. The catalysed reaction is pppGp(2'-5')A = 2',3'-cGAMP + diphosphate. Nucleotidyltransferase that catalyzes the formation of cyclic GMP-AMP (2',3'-cGAMP) from ATP and GTP and plays a key role in innate immunity. Acts as a key sensor of double-stranded RNA (dsRNA), the presence of dsRNA in the cytoplasm being a danger signal that triggers the immune responses. Directly binds dsRNA, activating the nucleotidyltransferase activity, leading to synthesis of 2',3'-cGAMP, a second messenger that binds to and activates Sting, thereby triggering the immune response via activation of the NF-kappa-B transcription factor. The protein is Cyclic GMP-AMP synthase-like receptor of Microplitis demolitor (Parasitoid wasp).